The following is a 459-amino-acid chain: Putrescine aminotransferase (459 aa).

Residues 150 to 151 (GT) and Gln274 contribute to the pyridoxal 5'-phosphate site. At Lys300 the chain carries N6-(pyridoxal phosphate)lysine. Thr332 lines the pyridoxal 5'-phosphate pocket.

It belongs to the class-III pyridoxal-phosphate-dependent aminotransferase family. Putrescine aminotransferase subfamily. Requires pyridoxal 5'-phosphate as cofactor.

It carries out the reaction an alkane-alpha,omega-diamine + 2-oxoglutarate = an omega-aminoaldehyde + L-glutamate. It catalyses the reaction putrescine + 2-oxoglutarate = 1-pyrroline + L-glutamate + H2O. The catalysed reaction is cadaverine + 2-oxoglutarate = 5-aminopentanal + L-glutamate. It participates in amine and polyamine degradation; putrescine degradation; 4-aminobutanal from putrescine (transaminase route): step 1/1. Catalyzes the aminotransferase reaction from putrescine to 2-oxoglutarate, leading to glutamate and 4-aminobutanal, which spontaneously cyclizes to form 1-pyrroline. This is the first step in one of two pathways for putrescine degradation, where putrescine is converted into 4-aminobutanoate (gamma-aminobutyrate or GABA) via 4-aminobutanal. Also functions as a cadaverine transaminase in a a L-lysine degradation pathway to succinate that proceeds via cadaverine, glutarate and L-2-hydroxyglutarate. This is Putrescine aminotransferase from Escherichia coli O8 (strain IAI1).